A 195-amino-acid polypeptide reads, in one-letter code: Nucleoid occlusion factor SlmA (195 aa).

An HTH tetR-type domain is found at 6–66 (PSRRESILQA…ALIEFAEEAV (61 aa)). Positions 29–48 (TTAGLAKTVGVTEAALYRHF) form a DNA-binding region, H-T-H motif. The stretch at 118-138 (RKRASQFFERLETQIRQALKE) forms a coiled coil.

Belongs to the nucleoid occlusion factor SlmA family. As to quaternary structure, homodimer. Interacts with FtsZ.

The protein localises to the cytoplasm. It localises to the nucleoid. Functionally, required for nucleoid occlusion (NO) phenomenon, which prevents Z-ring formation and cell division over the nucleoid. Acts as a DNA-associated cell division inhibitor that binds simultaneously chromosomal DNA and FtsZ, and disrupts the assembly of FtsZ polymers. SlmA-DNA-binding sequences (SBS) are dispersed on non-Ter regions of the chromosome, preventing FtsZ polymerization at these regions. This chain is Nucleoid occlusion factor SlmA, found in Marinobacter nauticus (strain ATCC 700491 / DSM 11845 / VT8) (Marinobacter aquaeolei).